Consider the following 432-residue polypeptide: ATP-dependent RNA helicase RhlB (432 aa).

The Q motif signature appears at 9–37 (QRFADLPLHAEVIQALNENGFEFCTPIQA). The region spanning 40–219 (LPVLLKAKDI…YDHMNDPEKV (180 aa)) is the Helicase ATP-binding domain. ATP is bound at residue 53 to 60 (AQTGTGKT). The short motif at 165-168 (DEAD) is the DEAD box element. The Helicase C-terminal domain maps to 243 to 390 (KMRLLLTLME…VSRYDREALL (148 aa)). Positions 395–432 (TPVKIHRKHPTSRTRDGAKGAHRSGGARPPRHRTRRPS) are disordered. Basic residues predominate over residues 423 to 432 (PPRHRTRRPS).

The protein belongs to the DEAD box helicase family. RhlB subfamily. In terms of assembly, component of the RNA degradosome, which is a multiprotein complex involved in RNA processing and mRNA degradation.

The protein localises to the cytoplasm. It carries out the reaction ATP + H2O = ADP + phosphate + H(+). Functionally, DEAD-box RNA helicase involved in RNA degradation. Has RNA-dependent ATPase activity and unwinds double-stranded RNA. This chain is ATP-dependent RNA helicase RhlB, found in Shewanella denitrificans (strain OS217 / ATCC BAA-1090 / DSM 15013).